A 107-amino-acid chain; its full sequence is Diuretic hormone 45 (107 aa).

A propeptide spanning residues 1–44 is cleaved from the precursor; it reads LYAMSPMAARYSAGAPWLYLLADMPRDSQRLVDPADLHEGRARP. Position 91 is a valine amide (valine 91).

As to expression, expressed in corpora cardiaca (CC), corpora allata (CA), antennal lobe (AL) and gnathal ganglion (GNG) (at protein level). Expression in AL and GNG detected in some animals, in CC and CA in few animals (at protein level).

It is found in the secreted. Regulation of fluid secretion. This is Diuretic hormone 45 from Agrotis ipsilon (Black cutworm moth).